A 520-amino-acid chain; its full sequence is Ribonuclease Y (520 aa).

Residues 4 to 24 form a helical membrane-spanning segment; the sequence is TVWILISILLATVGAVVGFFV. The KH domain occupies 210–273; the sequence is TVSVVNLPND…ETARIALDKL (64 aa). Residues 336–429 enclose the HD domain; it reads VLKHSMEVAY…VAAADALSAA (94 aa).

This sequence belongs to the RNase Y family.

It localises to the cell membrane. In terms of biological role, endoribonuclease that initiates mRNA decay. This chain is Ribonuclease Y, found in Bacillus cereus (strain ZK / E33L).